The primary structure comprises 274 residues: Dermonecrotic toxin LarSicTox-alphaIB2bii (274 aa).

H3 is a catalytic residue. Residues E23 and D25 each coordinate Mg(2+). Residue H39 is the Nucleophile of the active site. 2 disulfide bridges follow: C43–C49 and C45–C188. D83 is a Mg(2+) binding site. A glycan (N-linked (GlcNAc...) asparagine) is linked at N251.

This sequence belongs to the arthropod phospholipase D family. Class II subfamily. The cofactor is Mg(2+). As to expression, expressed by the venom gland.

It localises to the secreted. The catalysed reaction is an N-(acyl)-sphingosylphosphocholine = an N-(acyl)-sphingosyl-1,3-cyclic phosphate + choline. It catalyses the reaction an N-(acyl)-sphingosylphosphoethanolamine = an N-(acyl)-sphingosyl-1,3-cyclic phosphate + ethanolamine. The enzyme catalyses a 1-acyl-sn-glycero-3-phosphocholine = a 1-acyl-sn-glycero-2,3-cyclic phosphate + choline. It carries out the reaction a 1-acyl-sn-glycero-3-phosphoethanolamine = a 1-acyl-sn-glycero-2,3-cyclic phosphate + ethanolamine. In terms of biological role, dermonecrotic toxins cleave the phosphodiester linkage between the phosphate and headgroup of certain phospholipids (sphingolipid and lysolipid substrates), forming an alcohol (often choline) and a cyclic phosphate. This toxin acts on sphingomyelin (SM). It may also act on ceramide phosphoethanolamine (CPE), lysophosphatidylcholine (LPC) and lysophosphatidylethanolamine (LPE), but not on lysophosphatidylserine (LPS), and lysophosphatidylglycerol (LPG). It acts by transphosphatidylation, releasing exclusively cyclic phosphate products as second products. Induces dermonecrosis, hemolysis, increased vascular permeability, edema, inflammatory response, and platelet aggregation. The sequence is that of Dermonecrotic toxin LarSicTox-alphaIB2bii from Loxosceles arizonica (Arizona brown spider).